A 159-amino-acid polypeptide reads, in one-letter code: ATP synthase subunit b', chloroplastic (159 aa).

The chain crosses the membrane as a helical span at residues 30-47 (LMALQFLALTIILNLIYY).

The protein belongs to the ATPase B chain family. As to quaternary structure, F-type ATPases have 2 components, F(1) - the catalytic core - and F(0) - the membrane proton channel. F(1) has five subunits: alpha(3), beta(3), gamma(1), delta(1), epsilon(1). F(0) has four main subunits: a(1), b(1), b'(1) and c(10-14). The alpha and beta chains form an alternating ring which encloses part of the gamma chain. F(1) is attached to F(0) by a central stalk formed by the gamma and epsilon chains, while a peripheral stalk is formed by the delta, b and b' chains.

It is found in the plastid. The protein localises to the chloroplast thylakoid membrane. Functionally, f(1)F(0) ATP synthase produces ATP from ADP in the presence of a proton or sodium gradient. F-type ATPases consist of two structural domains, F(1) containing the extramembraneous catalytic core and F(0) containing the membrane proton channel, linked together by a central stalk and a peripheral stalk. During catalysis, ATP synthesis in the catalytic domain of F(1) is coupled via a rotary mechanism of the central stalk subunits to proton translocation. In terms of biological role, component of the F(0) channel, it forms part of the peripheral stalk, linking F(1) to F(0). The b'-subunit is a diverged and duplicated form of b found in plants and photosynthetic bacteria. The chain is ATP synthase subunit b', chloroplastic from Antithamnion sp. (Red alga).